The following is a 416-amino-acid chain: Neurotensin receptor type 2 (416 aa).

Over 1–32 (METSSLWPPRPSPSAGLSLEARLGVDTRLWAK) the chain is Extracellular. The chain crosses the membrane as a helical span at residues 33–55 (VLFTALYSLIFALGTAGNALSVH). Residues 56 to 64 (VVLKARAGR) lie on the Cytoplasmic side of the membrane. Residues 65–87 (PGRLRYHVLSLALSALLLLLISV) traverse the membrane as a helical segment. Residues 88–109 (PMELYNFVWSHYPWVFGDLGCR) lie on the Extracellular side of the membrane. Cys108 and Cys194 are oxidised to a cystine. A helical membrane pass occupies residues 110–131 (GYYFVRELCAYATVLSVASLSA). The Cytoplasmic portion of the chain corresponds to 132 to 154 (ERCLAVCQPLRARRLLTPRRTRR). A helical membrane pass occupies residues 155-176 (LLSLVWVASLGLALPMAVIMGQ). Over 177-217 (KHEMERADGEPEPASRVCTVLVSRATLQVFIQVNVLVSFVL) the chain is Extracellular. A helical transmembrane segment spans residues 218–237 (PLALTAFLNGITVNHLVALY). The Cytoplasmic portion of the chain corresponds to 238–297 (SQVPSASAQVNSIPSRLELLSEEGLLGFITWRKTLSLGVQASLVRHKDASQIRSLQHSAQ). A helical membrane pass occupies residues 298 to 318 (VLRAIVAVYVICWLPYHARRL). At 319–337 (MYCYIPDDGWTDELYDFYH) the chain is on the extracellular side. A helical transmembrane segment spans residues 338–358 (YFYMVTNTLFYVSSAVTPVLY). Topologically, residues 359 to 416 (NAVSSSFRKLFLESLSSLCGEQRSVVPLPQEAPESTTSTYSFRLWGSPRNPSLGEIQV) are cytoplasmic. Cys377 carries the S-palmitoyl cysteine lipid modification. Residue Ser410 is modified to Phosphoserine.

This sequence belongs to the G-protein coupled receptor 1 family. Neurotensin receptor subfamily. NTSR2 sub-subfamily. In terms of tissue distribution, expressed maximally in the cerebellum, hippocampus, piriform cortex and neocortex of adult brain.

Its subcellular location is the cell membrane. Its function is as follows. Receptor for the tridecapeptide neurotensin. It is associated with G proteins that activate a phosphatidylinositol-calcium second messenger system. This chain is Neurotensin receptor type 2 (Ntsr2), found in Mus musculus (Mouse).